A 150-amino-acid chain; its full sequence is Lipoprotein signal peptidase (150 aa).

3 helical membrane passes run 5–25 (LSLV…NWVV), 59–79 (QQWF…WFLW), and 83–103 (GQNW…GNFI). Catalysis depends on residues Asp113 and Asp129. Residues 124–144 (IFNIADILLSVGFVVLFIAIL) traverse the membrane as a helical segment.

The protein belongs to the peptidase A8 family.

Its subcellular location is the cell membrane. The catalysed reaction is Release of signal peptides from bacterial membrane prolipoproteins. Hydrolyzes -Xaa-Yaa-Zaa-|-(S,diacylglyceryl)Cys-, in which Xaa is hydrophobic (preferably Leu), and Yaa (Ala or Ser) and Zaa (Gly or Ala) have small, neutral side chains.. The protein operates within protein modification; lipoprotein biosynthesis (signal peptide cleavage). This protein specifically catalyzes the removal of signal peptides from prolipoproteins. The sequence is that of Lipoprotein signal peptidase from Lactococcus lactis subsp. cremoris (strain MG1363).